Here is a 332-residue protein sequence, read N- to C-terminus: Cinnamoyl-CoA reductase 2 (332 aa).

Residues 12 to 18 (GAGGYIA), R37, K43, 63 to 64 (DL), 83 to 85 (TAS), Y156, K160, 183 to 186 (PVLV), and S198 contribute to the NADP(+) site. C149 and C157 are oxidised to a cystine. K160 functions as the Proton donor in the catalytic mechanism.

It belongs to the NAD(P)-dependent epimerase/dehydratase family. Dihydroflavonol-4-reductase subfamily. Expressed at low levels in leaves, stems and flowers.

It carries out the reaction (E)-cinnamaldehyde + NADP(+) + CoA = (E)-cinnamoyl-CoA + NADPH + H(+). Its pathway is aromatic compound metabolism; phenylpropanoid biosynthesis. Functionally, cinnamoyl-CoA reductase probably involved in the formation of phenolic compounds associated with the hypersensitive response. Seems not to be involved in lignin biosynthesis. The sequence is that of Cinnamoyl-CoA reductase 2 (CCR2) from Arabidopsis thaliana (Mouse-ear cress).